The sequence spans 187 residues: MIRGGDIAKGTVLLHKGAPYLVVEREFVNPGKGAAFARVKMKHLRDGSVLTQTVKTSDTVEDAVVDSHRAQYQYDDGECFVFMDTRSFEQIFVSKGNVPGRERYLREGDEYDILIWNGESIDIKIPTKMVFRVAHSEPYLKGDTVSGATKPVTTETGLVVRVPLFIKQGEKILINTETNEYQERVND.

This sequence belongs to the elongation factor P family.

The protein localises to the cytoplasm. Its pathway is protein biosynthesis; polypeptide chain elongation. Functionally, involved in peptide bond synthesis. Stimulates efficient translation and peptide-bond synthesis on native or reconstituted 70S ribosomes in vitro. Probably functions indirectly by altering the affinity of the ribosome for aminoacyl-tRNA, thus increasing their reactivity as acceptors for peptidyl transferase. The protein is Elongation factor P (efp) of Treponema pallidum (strain Nichols).